Reading from the N-terminus, the 37-residue chain is Large ribosomal subunit protein bL36c (37 aa).

This sequence belongs to the bacterial ribosomal protein bL36 family.

It is found in the plastid. Its subcellular location is the chloroplast. This is Large ribosomal subunit protein bL36c from Chloranthus spicatus (Chulantree).